We begin with the raw amino-acid sequence, 65 residues long: Large ribosomal subunit protein bL35 (65 aa).

It belongs to the bacterial ribosomal protein bL35 family.

In Phytoplasma australiense, this protein is Large ribosomal subunit protein bL35.